Here is a 248-residue protein sequence, read N- to C-terminus: DNA polymerase sliding clamp (248 aa).

The protein belongs to the PCNA family. As to quaternary structure, homotrimer. The subunits circularize to form a toroid; DNA passes through its center. Replication factor C (RFC) is required to load the toroid on the DNA.

In terms of biological role, sliding clamp subunit that acts as a moving platform for DNA processing. Responsible for tethering the catalytic subunit of DNA polymerase and other proteins to DNA during high-speed replication. In Nitrosopumilus maritimus (strain SCM1), this protein is DNA polymerase sliding clamp.